Reading from the N-terminus, the 1053-residue chain is DIS3-like exonuclease 1 (1053 aa).

The 75-residue stretch at 236-310 folds into the CSD1 domain; that stretch reads AGIKSGRYIQ…KSEWKGRTAA (75 aa). Residues 306–332 form a disordered region; that stretch reads GRTAALGENDSDDKASGESPSEPMPTG. Residues 365-431 enclose the CSD2 domain; the sequence is ILVTPWDYRI…GEIATILVEN (67 aa). An RNB domain is found at 465–816; it reads RKDLRTTHLV…VHRLLMAAIS (352 aa). Ser989 is subject to Phosphoserine.

Belongs to the RNR ribonuclease family. As to quaternary structure, component of the RNA exosome complex. The catalytically inactive RNA exosome core (Exo-9) complex is believed to associate with catalytic subunits EXOSC10, and DIS3 or DIS3L in cytoplasmic- and nuclear-specific RNA exosome complex forms. It depends on Mg(2+) as a cofactor.

It is found in the cytoplasm. It carries out the reaction Exonucleolytic cleavage in the 3'- to 5'-direction to yield nucleoside 5'-phosphates.. Its function is as follows. Catalytic component of the RNA exosome complex which has 3'-&gt;5' exoribonuclease activity and participates in a multitude of cellular RNA processing and degradation events. In the cytoplasm, the RNA exosome complex is involved in general mRNA turnover and specifically degrades inherently unstable mRNAs containing AU-rich elements (AREs) within their 3' untranslated regions, and in RNA surveillance pathways, preventing translation of aberrant mRNAs. It seems to be involved in degradation of histone mRNA. In Mus musculus (Mouse), this protein is DIS3-like exonuclease 1 (Dis3l).